Consider the following 579-residue polypeptide: Zinc finger protein 382 (579 aa).

Basic residues predominate over residues 1-12 (MGRPGRKPRGRA). Residues 1 to 37 (MGRPGRKPRGRARPGLFPFPKEELRQGGSSPANLNAM) are disordered. The segment at 12-135 (ARPGLFPFPK…DKPPKSIVII (124 aa)) is mediates interaction with TRIM28. Residues 27–36 (GGSSPANLNA) are compositionally biased toward polar residues. 2 represses transcription regions span residues 40 to 81 (GPVS…FISV) and 105 to 240 (IFPS…PEQR). A KRAB domain is found at 42-113 (VSFKDVTVDF…RIFPSQSYLE (72 aa)). A C2H2-type 1; degenerate zinc finger spans residues 241–263 (FEYNKCDSSFLMTGVEFPHGRAH). 9 consecutive C2H2-type zinc fingers follow at residues 325–347 (FQCP…ERIH), 353–375 (YICC…EKTH), 381–403 (YLCV…HKAH), 409–431 (YECT…QRTH), 437–459 (YQCT…QRTH), 465–487 (YICS…QRIH), 493–515 (YICS…YRIH), 521–543 (NGCP…QKIH), and 549–571 (YECQ…QKTH). Positions 325–579 (FQCPYCGNSF…THKTETMRFQ (255 aa)) are required for transcriptional repression activity; probably mediates sequence-specific DNA-binding.

Belongs to the krueppel C2H2-type zinc-finger protein family. Interacts with TRIM28; enhances the transcriptional repressor activity.

The protein resides in the nucleus. In terms of biological role, functions as a sequence-specific transcriptional repressor. The sequence is that of Zinc finger protein 382 (Znf382) from Mus musculus (Mouse).